We begin with the raw amino-acid sequence, 355 residues long: Uroporphyrinogen decarboxylase (355 aa).

Residues arginine 27–arginine 31, aspartate 77, tyrosine 154, threonine 209, and histidine 327 contribute to the substrate site.

The protein belongs to the uroporphyrinogen decarboxylase family. As to quaternary structure, homodimer.

Its subcellular location is the cytoplasm. It carries out the reaction uroporphyrinogen III + 4 H(+) = coproporphyrinogen III + 4 CO2. It functions in the pathway porphyrin-containing compound metabolism; protoporphyrin-IX biosynthesis; coproporphyrinogen-III from 5-aminolevulinate: step 4/4. Its function is as follows. Catalyzes the decarboxylation of four acetate groups of uroporphyrinogen-III to yield coproporphyrinogen-III. The sequence is that of Uroporphyrinogen decarboxylase from Aeromonas salmonicida (strain A449).